A 120-amino-acid chain; its full sequence is Guanidine hydrolase-activating protein A (120 aa).

3 residues coordinate Ni(2+): His2, Glu3, and Glu41. Zn(2+) contacts are provided by Cys74, Cys77, Cys91, and Cys94.

The protein belongs to the HypA/HybF family.

In terms of biological role, involved in the maturation of the nickel-dependent guanidine hydrolase GdmH. Required for nickel insertion into the metal center of GdmH. Seems to be required only for GdmH activation and not for activity. The protein is Guanidine hydrolase-activating protein A of Synechocystis sp. (strain ATCC 27184 / PCC 6803 / Kazusa).